The sequence spans 364 residues: Phosphoserine aminotransferase (364 aa).

Arg-41 lines the L-glutamate pocket. Residues Ala-75–Ser-76, Trp-100, Thr-155, Asp-175, and Gln-198 each bind pyridoxal 5'-phosphate. N6-(pyridoxal phosphate)lysine is present on Lys-199. Asn-239–Thr-240 is a pyridoxal 5'-phosphate binding site.

The protein belongs to the class-V pyridoxal-phosphate-dependent aminotransferase family. SerC subfamily. As to quaternary structure, homodimer. Pyridoxal 5'-phosphate is required as a cofactor.

Its subcellular location is the cytoplasm. The enzyme catalyses O-phospho-L-serine + 2-oxoglutarate = 3-phosphooxypyruvate + L-glutamate. It catalyses the reaction 4-(phosphooxy)-L-threonine + 2-oxoglutarate = (R)-3-hydroxy-2-oxo-4-phosphooxybutanoate + L-glutamate. Its pathway is amino-acid biosynthesis; L-serine biosynthesis; L-serine from 3-phospho-D-glycerate: step 2/3. Catalyzes the reversible conversion of 3-phosphohydroxypyruvate to phosphoserine and of 3-hydroxy-2-oxo-4-phosphonooxybutanoate to phosphohydroxythreonine. The polypeptide is Phosphoserine aminotransferase (Streptococcus uberis (strain ATCC BAA-854 / 0140J)).